Consider the following 367-residue polypeptide: Peptide chain release factor 2 (367 aa).

Gln254 is modified (N5-methylglutamine).

This sequence belongs to the prokaryotic/mitochondrial release factor family. Methylated by PrmC. Methylation increases the termination efficiency of RF2.

Its subcellular location is the cytoplasm. Functionally, peptide chain release factor 2 directs the termination of translation in response to the peptide chain termination codons UGA and UAA. The protein is Peptide chain release factor 2 of Bordetella avium (strain 197N).